A 511-amino-acid polypeptide reads, in one-letter code: Sodium/proline symporter 2 (511 aa).

13 helical membrane-spanning segments follow: residues 16 to 36, 54 to 74, 85 to 105, 139 to 159, 175 to 195, 204 to 224, 246 to 266, 286 to 306, 327 to 347, 381 to 401, 410 to 430, 438 to 458, and 467 to 487; these read WQTY…GYYG, IGPY…WMIM, LSAM…YFVV, IISG…GFVS, GLLM…YLAV, VIML…LNGI, VLGI…PHII, ISWM…GIAF, ILFH…AIMS, FLMV…WIAW, LVGN…IFSL, TGAL…IVWI, and LFGM…TYFV.

This sequence belongs to the sodium:solute symporter (SSF) (TC 2.A.21) family.

The protein resides in the cell membrane. It carries out the reaction L-proline(in) + Na(+)(in) = L-proline(out) + Na(+)(out). Its function is as follows. Catalyzes the sodium-dependent uptake of extracellular L-proline. In Staphylococcus saprophyticus subsp. saprophyticus (strain ATCC 15305 / DSM 20229 / NCIMB 8711 / NCTC 7292 / S-41), this protein is Sodium/proline symporter 2 (putP2).